Consider the following 353-residue polypeptide: GTPase Obg (353 aa).

The Obg domain maps to 1–159 (MKFLDEAKVY…RWIWLRLKLI (159 aa)). One can recognise an OBG-type G domain in the interval 160 to 327 (ADAGLVGLPN…ALRALAAVIG (168 aa)). Residues 166–173 (GLPNAGKS), 191–195 (FTTLH), 212–215 (DIPG), 279–282 (NKID), and 308–310 (SGI) contribute to the GTP site. Positions 173 and 193 each coordinate Mg(2+). The tract at residues 332 to 353 (SDKAKGAADNAANAEPWAPQDA) is disordered.

This sequence belongs to the TRAFAC class OBG-HflX-like GTPase superfamily. OBG GTPase family. In terms of assembly, monomer. Mg(2+) serves as cofactor.

Its subcellular location is the cytoplasm. Its function is as follows. An essential GTPase which binds GTP, GDP and possibly (p)ppGpp with moderate affinity, with high nucleotide exchange rates and a fairly low GTP hydrolysis rate. Plays a role in control of the cell cycle, stress response, ribosome biogenesis and in those bacteria that undergo differentiation, in morphogenesis control. The protein is GTPase Obg of Rhodopseudomonas palustris (strain HaA2).